Consider the following 193-residue polypeptide: Orotate phosphoribosyltransferase (193 aa).

5-phospho-alpha-D-ribose 1-diphosphate is bound by residues arginine 107, lysine 108, lysine 111, histidine 113, and 133-141; that span reads EDVITSGGS. Positions 137 and 165 each coordinate orotate.

The protein belongs to the purine/pyrimidine phosphoribosyltransferase family. PyrE subfamily. Homodimer. The cofactor is Mg(2+).

The catalysed reaction is orotidine 5'-phosphate + diphosphate = orotate + 5-phospho-alpha-D-ribose 1-diphosphate. It functions in the pathway pyrimidine metabolism; UMP biosynthesis via de novo pathway; UMP from orotate: step 1/2. Functionally, catalyzes the transfer of a ribosyl phosphate group from 5-phosphoribose 1-diphosphate to orotate, leading to the formation of orotidine monophosphate (OMP). This chain is Orotate phosphoribosyltransferase, found in Rhodopirellula baltica (strain DSM 10527 / NCIMB 13988 / SH1).